Reading from the N-terminus, the 350-residue chain is THUMP domain-containing protein 1 (350 aa).

The span at 1 to 10 shows a compositional bias: polar residues; that stretch reads MATTAQQSPQ. 2 disordered regions span residues 1–42 and 75–96; these read MATT…LEPG and PEKF…DDAE. An N-acetylalanine modification is found at alanine 2. Residues serine 8, serine 86, serine 88, and serine 119 each carry the phosphoserine modification. Residues 147–254 enclose the THUMP domain; the sequence is DMYKTKKKKT…KAVCCLSVVK (108 aa). Serine 270 is subject to Phosphoserine. A compositionally biased stretch (basic and acidic residues) spans 270-292; that stretch reads SAKDSQPHPKLGNGKEAKLEPDS. The segment at 270–350 is disordered; sequence SAKDSQPHPK…VPKTNENELS (81 aa).

The protein belongs to the THUMPD1 family. In terms of assembly, interacts with NAT10. Binds tRNA.

Functions as a tRNA-binding adapter to mediate NAT10-dependent tRNA acetylation modifying cytidine to N4-acetylcytidine (ac4C). The chain is THUMP domain-containing protein 1 (Thumpd1) from Mus musculus (Mouse).